The primary structure comprises 175 residues: Orotate phosphoribosyltransferase (175 aa).

5-phospho-alpha-D-ribose 1-diphosphate is bound by residues R89, K90, K93, and 115 to 123; that span reads EDIATTGQS. T119 and R147 together coordinate orotate.

It belongs to the purine/pyrimidine phosphoribosyltransferase family. PyrE subfamily. Homodimer. It depends on Mg(2+) as a cofactor.

It catalyses the reaction orotidine 5'-phosphate + diphosphate = orotate + 5-phospho-alpha-D-ribose 1-diphosphate. Its pathway is pyrimidine metabolism; UMP biosynthesis via de novo pathway; UMP from orotate: step 1/2. Catalyzes the transfer of a ribosyl phosphate group from 5-phosphoribose 1-diphosphate to orotate, leading to the formation of orotidine monophosphate (OMP). The polypeptide is Orotate phosphoribosyltransferase (Halobacterium salinarum (strain ATCC 700922 / JCM 11081 / NRC-1) (Halobacterium halobium)).